Consider the following 307-residue polypeptide: MPEFPPPIDPSYVPSVSLTRIPANAPIEDILAVLERDGGLILTDIISSQDVAAINDELDPYVQKARAESHAAYDLIPKQTIMVPGIVGKSPTMAKIAEYEVIDKLRTMVLQKKCTATWEDRTEEFTIGPLLNSSLTYNVSYGGPRQRLHRDDMIHGIYHHDGEYSLSNETMLGFMFAGCKTTRENGATMAIPGSHKWNHTRVPRTDEVCFAEMEPGSAFVFLGTVYHGAGHNSVPDQVRKVYGLFFISGTLRPEENQFLAIPRSKVLGMSDKMLSLLGYKKPETWLGIVNNGDPAENLKEVLDMANS.

Fe cation-binding residues include His-149, Asp-151, and His-227.

It belongs to the PhyH family. In terms of assembly, homodimer. Fe cation is required as a cofactor.

Its pathway is mycotoxin biosynthesis. Its function is as follows. Dioxygenase; part of the gene cluster that mediates the biosynthesis of swainsonine (SW), a cytotoxic fungal alkaloid and a potential cancer therapy drug. Swainsonine production occurs via a multibranched pathway and is dispensable for fungal colonization of plants and infection of insect hosts. The first step of swainsonine biosynthesis is the production of the precursor pipecolic acid (PA) via conversion of L-lysine (Lys) to 1-piperideine-6-carboxylate (P6C) by the aminotransferase swnA, the latter being further reduced to PA by the reductase swnR. The PKS-NRPS hybrid synthetase swnK uptakes and condensates PA and malonyl-CoA with and without skipping of the ketoreductase (KR) domain in order to produce 3 intermediates, 1-oxoindolizidine, (1S)-1-hydroxyindolizin, and (1R)-1-hydroxyindolizine; with the transisomer (1S)-1-hydroxyindolizin being predominant. The terminal thioester reductase (TE) domain of swnK is involved in reduction of the thioester bond to release the intermediate aldehydes. The oxidoreductase swnN could contribute to the reduction of 1-oxoindolizidine to (1S)-1-hydroxyindolizin and (1R)-1-hydroxyindolizine, contributing to the major route of SW production. The dioxygenase swnH2 would be responsible for the oxidization of (1R)-1-hydroxyindolizine into (1R,2S)-1,2-dihydroxyindolizine and of (1S)-1-hydroxyindolizin to yield both (1R,2S)-1,2-dihydroxyindolizine and (1S,2S)-1,2-dihydroxyindolizine. The dioxygenase swnH1 then performs the conversion of the 1,2-dihydroxyindolizine epimers to SW. This Arthroderma benhamiae (strain ATCC MYA-4681 / CBS 112371) (Trichophyton mentagrophytes) protein is Dioxygenase swnH1.